Here is a 383-residue protein sequence, read N- to C-terminus: Na(+)/H(+) antiporter NhaA (383 aa).

A run of 11 helical transmembrane segments spans residues 19 to 39 (AGGV…NSPL), 56 to 76 (VLHG…GLEI), 92 to 112 (ILPG…FLAL), 122 to 142 (GWAV…ALLG), 151 to 171 (IFLT…IALF), 174 to 194 (AKLS…LAAL), 212 to 232 (LWGA…ALAL), 255 to 275 (VGYG…FAGL), 292 to 312 (LLFG…WLGF), 326 to 346 (GVAV…ALAF), and 356 to 376 (VKVG…LVLL).

It belongs to the NhaA Na(+)/H(+) (TC 2.A.33) antiporter family.

Its subcellular location is the cell inner membrane. It carries out the reaction Na(+)(in) + 2 H(+)(out) = Na(+)(out) + 2 H(+)(in). In terms of biological role, na(+)/H(+) antiporter that extrudes sodium in exchange for external protons. The sequence is that of Na(+)/H(+) antiporter NhaA from Paramagnetospirillum magneticum (strain ATCC 700264 / AMB-1) (Magnetospirillum magneticum).